Reading from the N-terminus, the 161-residue chain is Transcriptional repressor NrdR (161 aa).

Residues 1–23 are disordered; that stretch reads MRCPFCGHPDTQVKDSRPAEDGN. Residues 3–34 fold into a zinc finger; that stretch reads CPFCGHPDTQVKDSRPAEDGNAIRRRRQCPSC. Residues 11–23 are compositionally biased toward basic and acidic residues; sequence TQVKDSRPAEDGN. Positions 49–139 constitute an ATP-cone domain; sequence LTVMKKSGRR…VYKDFHKVED (91 aa).

This sequence belongs to the NrdR family. Requires Zn(2+) as cofactor.

In terms of biological role, negatively regulates transcription of bacterial ribonucleotide reductase nrd genes and operons by binding to NrdR-boxes. This Maricaulis maris (strain MCS10) (Caulobacter maris) protein is Transcriptional repressor NrdR.